The following is a 324-amino-acid chain: Methenyltetrahydromethanopterin cyclohydrolase (324 aa).

The protein belongs to the MCH family.

It localises to the cytoplasm. The catalysed reaction is 5,10-methenyl-5,6,7,8-tetrahydromethanopterin + H2O = N(5)-formyl-5,6,7,8-tetrahydromethanopterin + H(+). It functions in the pathway one-carbon metabolism; formaldehyde degradation; formate from formaldehyde (H(4)MPT route): step 3/5. In terms of biological role, catalyzes the hydrolysis of methenyl-H(4)MPT(+) to 5-formyl-H(4)MPT. The sequence is that of Methenyltetrahydromethanopterin cyclohydrolase from Methylobacterium nodulans (strain LMG 21967 / CNCM I-2342 / ORS 2060).